Reading from the N-terminus, the 296-residue chain is Cbb3-type cytochrome c oxidase subunit CcoP (296 aa).

Residues 1–31 (MAQNYKDELSGVETTGHEWDGLRELNNPLPK) lie on the Cytoplasmic side of the membrane. Residues 32 to 52 (WWLYLFYVCIAWAMVYYVFYP) traverse the membrane as a helical segment. The Periplasmic segment spans residues 53-296 (AWPLGKTYTK…VYVHNLGGGK (244 aa)). Cytochrome c domains are found at residues 108–200 (FAMA…LSLN) and 207–293 (GKVA…HNLG). Heme c-binding residues include Cys121, Cys124, His125, Met175, Cys220, Cys223, His224, and Met270.

It belongs to the CcoP / FixP family. As to quaternary structure, component of the cbb3-type cytochrome c oxidase at least composed of CcoN, CcoO, CcoQ and CcoP. It depends on heme c as a cofactor.

The protein localises to the cell inner membrane. Its pathway is energy metabolism; oxidative phosphorylation. Functionally, C-type cytochrome. Part of the cbb3-type cytochrome c oxidase complex. CcoP subunit is required for transferring electrons from donor cytochrome c via its heme groups to CcoO subunit. From there, electrons are shuttled to the catalytic binuclear center of CcoN subunit where oxygen reduction takes place. The complex also functions as a proton pump. In Azospirillum sp. (strain B510), this protein is Cbb3-type cytochrome c oxidase subunit CcoP.